We begin with the raw amino-acid sequence, 130 residues long: Transcription antitermination protein NusB (130 aa).

This sequence belongs to the NusB family.

In terms of biological role, involved in transcription antitermination. Required for transcription of ribosomal RNA (rRNA) genes. Binds specifically to the boxA antiterminator sequence of the ribosomal RNA (rrn) operons. The sequence is that of Transcription antitermination protein NusB from Bacillus anthracis (strain A0248).